Reading from the N-terminus, the 524-residue chain is Cytochrome P450 1A1 (524 aa).

Residues 33-44 (TRTWVPKGLKSP) form a mitochondrial targeting signal region. Ser71 carries an O-linked (GlcNAc) serine glycan. Phe228 provides a ligand contact to substrate. A heme-binding site is contributed by Cys461.

This sequence belongs to the cytochrome P450 family. Both Cytochrome P450MT2A and Cytochrome P450MT2B interact with cytosolic chaperones HSP70 and HSP90; this interaction is required for initial targeting to mitochondria. P450MT2B interacts (via mitochondrial targeting signal) with TOMM40 (via N-terminus); this interaction is required for translocation across the mitochondrial outer membrane. It depends on heme as a cofactor. In terms of processing, two forms; MT2A (long form) and MT2B (short form); are produced by NH2-terminal proteolytic cleavage. This cleavage activates a cryptic mitochondrial targeting signal. In terms of tissue distribution, liver.

The protein localises to the cytoplasm. It is found in the endoplasmic reticulum membrane. It localises to the mitochondrion inner membrane. The protein resides in the microsome membrane. It catalyses the reaction an organic molecule + reduced [NADPH--hemoprotein reductase] + O2 = an alcohol + oxidized [NADPH--hemoprotein reductase] + H2O + H(+). The catalysed reaction is estrone + reduced [NADPH--hemoprotein reductase] + O2 = 2-hydroxyestrone + oxidized [NADPH--hemoprotein reductase] + H2O + H(+). The enzyme catalyses estrone + reduced [NADPH--hemoprotein reductase] + O2 = 4-hydroxyestrone + oxidized [NADPH--hemoprotein reductase] + H2O + H(+). It carries out the reaction estrone + reduced [NADPH--hemoprotein reductase] + O2 = 6alpha-hydroxyestrone + oxidized [NADPH--hemoprotein reductase] + H2O + H(+). It catalyses the reaction estrone + reduced [NADPH--hemoprotein reductase] + O2 = 15alpha-hydroxyestrone + oxidized [NADPH--hemoprotein reductase] + H2O + H(+). The catalysed reaction is estrone + reduced [NADPH--hemoprotein reductase] + O2 = 16alpha-hydroxyestrone + oxidized [NADPH--hemoprotein reductase] + H2O + H(+). The enzyme catalyses 17beta-estradiol + reduced [NADPH--hemoprotein reductase] + O2 = 2-hydroxy-17beta-estradiol + oxidized [NADPH--hemoprotein reductase] + H2O + H(+). It carries out the reaction 17beta-estradiol + reduced [NADPH--hemoprotein reductase] + O2 = 4-hydroxy-17beta-estradiol + oxidized [NADPH--hemoprotein reductase] + H2O + H(+). It catalyses the reaction 17beta-estradiol + reduced [NADPH--hemoprotein reductase] + O2 = 6alpha-hydroxy-17beta-estradiol + oxidized [NADPH--hemoprotein reductase] + H2O + H(+). The catalysed reaction is 17beta-estradiol + reduced [NADPH--hemoprotein reductase] + O2 = 7alpha-hydroxy-17beta-estradiol + oxidized [NADPH--hemoprotein reductase] + H2O + H(+). The enzyme catalyses 17beta-estradiol + reduced [NADPH--hemoprotein reductase] + O2 = 15alpha-hydroxy-17beta-estradiol + oxidized [NADPH--hemoprotein reductase] + H2O + H(+). It carries out the reaction (5Z,8Z,11Z)-eicosatrienoate + reduced [NADPH--hemoprotein reductase] + O2 = 19-hydroxy-(5Z,8Z,11Z)-eicosatrienoate + oxidized [NADPH--hemoprotein reductase] + H2O + H(+). It catalyses the reaction (5Z,8Z,11Z,14Z)-eicosatetraenoate + reduced [NADPH--hemoprotein reductase] + O2 = 16-hydroxy-(5Z,8Z,11Z,14Z)-eicosatetraenoate + oxidized [NADPH--hemoprotein reductase] + H2O + H(+). The catalysed reaction is (5Z,8Z,11Z,14Z)-eicosatetraenoate + reduced [NADPH--hemoprotein reductase] + O2 = 17-hydroxy-(5Z,8Z,11Z,14Z)-eicosatetraenoate + oxidized [NADPH--hemoprotein reductase] + H2O + H(+). The enzyme catalyses (5Z,8Z,11Z,14Z)-eicosatetraenoate + reduced [NADPH--hemoprotein reductase] + O2 = 18-hydroxy-(5Z,8Z,11Z,14Z)-eicosatetraenoate + oxidized [NADPH--hemoprotein reductase] + H2O + H(+). It carries out the reaction (5Z,8Z,11Z,14Z)-eicosatetraenoate + reduced [NADPH--hemoprotein reductase] + O2 = 19-hydroxy-(5Z,8Z,11Z,14Z)-eicosatetraenoate + oxidized [NADPH--hemoprotein reductase] + H2O + H(+). It catalyses the reaction (5Z,8Z,11Z,14Z,17Z)-eicosapentaenoate + reduced [NADPH--hemoprotein reductase] + O2 = 19-hydroxy-(5Z,8Z,11Z,14Z,17Z)-eicosapentaenoate + oxidized [NADPH--hemoprotein reductase] + H2O + H(+). The catalysed reaction is (5Z,8Z,11Z,14Z)-eicosatetraenoate + reduced [NADPH--hemoprotein reductase] + O2 = (8R,9S)-epoxy-(5Z,11Z,14Z)-eicosatrienoate + oxidized [NADPH--hemoprotein reductase] + H2O + H(+). The enzyme catalyses (5Z,8Z,11Z,14Z)-eicosatetraenoate + reduced [NADPH--hemoprotein reductase] + O2 = (11R,12S)-epoxy-(5Z,8Z,14Z)-eicosatrienoate + oxidized [NADPH--hemoprotein reductase] + H2O + H(+). It carries out the reaction (5Z,8Z,11Z,14Z)-eicosatetraenoate + reduced [NADPH--hemoprotein reductase] + O2 = (11S,12R)-epoxy-(5Z,8Z,14Z)-eicosatrienoate + oxidized [NADPH--hemoprotein reductase] + H2O + H(+). It catalyses the reaction (5Z,8Z,11Z,14Z)-eicosatetraenoate + reduced [NADPH--hemoprotein reductase] + O2 = (14R,15S)-epoxy-(5Z,8Z,11Z)-eicosatrienoate + oxidized [NADPH--hemoprotein reductase] + H2O + H(+). The catalysed reaction is (5Z,8Z,11Z,14Z,17Z)-eicosapentaenoate + reduced [NADPH--hemoprotein reductase] + O2 = (17R,18S)-epoxy-(5Z,8Z,11Z,14Z)-eicosatetraenoate + oxidized [NADPH--hemoprotein reductase] + H2O + H(+). The enzyme catalyses (4Z,7Z,10Z,13Z,16Z,19Z)-docosahexaenoate + reduced [NADPH--hemoprotein reductase] + O2 = (19S,20R)-epoxy-(4Z,7Z,10Z,13Z,16Z)-docosapentaenoate + oxidized [NADPH--hemoprotein reductase] + H2O + H(+). It carries out the reaction (4Z,7Z,10Z,13Z,16Z,19Z)-docosahexaenoate + reduced [NADPH--hemoprotein reductase] + O2 = (19R,20S)-epoxy-(4Z,7Z,10Z,13Z,16Z)-docosapentaenoate + oxidized [NADPH--hemoprotein reductase] + H2O + H(+). It catalyses the reaction all-trans-retinol + reduced [NADPH--hemoprotein reductase] + O2 = all-trans-retinal + oxidized [NADPH--hemoprotein reductase] + 2 H2O + H(+). The catalysed reaction is all-trans-retinal + reduced [NADPH--hemoprotein reductase] + O2 = all-trans-retinoate + oxidized [NADPH--hemoprotein reductase] + H2O + 2 H(+). The enzyme catalyses (13S)-hydroperoxy-(9Z,11E)-octadecadienoate = 13-oxo-(9Z,11E)-octadecadienoate + H2O. It carries out the reaction (12S)-hydroperoxy-(5Z,8Z,10E,14Z)-eicosatetraenoate = 12-oxo-(5Z,8Z,10E,14Z)-eicosatetraenoate + H2O. It catalyses the reaction (15S)-hydroperoxy-(5Z,8Z,11Z,13E)-eicosatetraenoate = 15-oxo-(5Z,8Z,11Z,13E)-eicosatetraenoate + H2O. The catalysed reaction is (5S)-hydroperoxy-(6E,8Z,11Z,14Z)-eicosatetraenoate = 5-oxo-(6E,8Z,11Z,14Z)-eicosatetraenoate + H2O. It functions in the pathway steroid hormone biosynthesis. Its pathway is lipid metabolism; fatty acid metabolism. The protein operates within cofactor metabolism; retinol metabolism. A cytochrome P450 monooxygenase involved in the metabolism of various endogenous substrates, including fatty acids, steroid hormones and vitamins. Mechanistically, uses molecular oxygen inserting one oxygen atom into a substrate, and reducing the second into a water molecule, with two electrons provided by NADPH via cytochrome P450 reductase (CPR; NADPH-ferrihemoprotein reductase). Catalyzes the hydroxylation of carbon-hydrogen bonds. Exhibits high catalytic activity for the formation of hydroxyestrogens from estrone (E1) and 17beta-estradiol (E2), namely 2-hydroxy E1 and E2, as well as D-ring hydroxylated E1 and E2 at the C15alpha and C16alpha positions. Displays different regioselectivities for polyunsaturated fatty acids (PUFA) hydroxylation. Catalyzes the epoxidation of double bonds of certain PUFA. Converts arachidonic acid toward epoxyeicosatrienoic acid (EET) regioisomers, 8,9-, 11,12-, and 14,15-EET, that function as lipid mediators in the vascular system. Displays an absolute stereoselectivity in the epoxidation of eicosapentaenoic acid (EPA) producing the 17(R),18(S) enantiomer. May play an important role in all-trans retinoic acid biosynthesis in extrahepatic tissues. Catalyzes two successive oxidative transformation of all-trans retinol to all-trans retinal and then to the active form all-trans retinoic acid. May also participate in eicosanoids metabolism by converting hydroperoxide species into oxo metabolites (lipoxygenase-like reaction, NADPH-independent). This chain is Cytochrome P450 1A1, found in Rattus norvegicus (Rat).